The primary structure comprises 741 residues: Oosporein cluster regulator OpS3 (741 aa).

Residues 16–39 (GRPARGQSTTTRSRNTQQSAPTSQ) form a disordered region. Low complexity predominate over residues 20–34 (RGQSTTTRSRNTQQS). Residues 44-69 (CRRCRQHRIKCSEKPCEPCRANNSKC) constitute a DNA-binding region (zn(2)-C6 fungal-type). Residues 139–167 (HPNTPNSCPSQSGDIRQQQIPCSQHASPA) form a disordered region. Residues 473 to 500 (TAGQSMARLSETIRQLETALDELPEQLL) are a coiled coil. A disordered region spans residues 501–528 (TRHGSRTPTNNGQTHRSRPTCSTMPHTN). Residues 506–528 (RTPTNNGQTHRSRPTCSTMPHTN) show a composition bias toward polar residues.

It localises to the nucleus. Its function is as follows. Transcription factor involved in regulation of gene cluster that mediates the biosynthesis of oosporein, a metabolite required for fungal virulence that acts by evading host immunity to facilitate fungal multiplication in insects. Binds oosporein cluster genes at a conserved 5'-CGGA-3' motif with the exception of OpS5. The presence of this motif in the OpS3 promoter would suggest the formation of a positive feedback loop for self-activation. The chain is Oosporein cluster regulator OpS3 from Beauveria bassiana (strain ARSEF 2860) (White muscardine disease fungus).